We begin with the raw amino-acid sequence, 430 residues long: Adenylosuccinate synthetase (430 aa).

Residues 13–19 (GDEGKGK) and 41–43 (GHT) each bind GTP. Asp-14 (proton acceptor) is an active-site residue. Mg(2+) contacts are provided by Asp-14 and Gly-41. IMP is bound by residues 14 to 17 (DEGK), 39 to 42 (NAGH), Thr-130, Arg-144, Gln-225, Thr-240, and Arg-304. The active-site Proton donor is His-42. 300–306 (ASTGRPR) serves as a coordination point for substrate. Residues Arg-306, 332 to 334 (KLD), and 414 to 416 (STG) contribute to the GTP site.

The protein belongs to the adenylosuccinate synthetase family. Homodimer. It depends on Mg(2+) as a cofactor.

It localises to the cytoplasm. The catalysed reaction is IMP + L-aspartate + GTP = N(6)-(1,2-dicarboxyethyl)-AMP + GDP + phosphate + 2 H(+). It functions in the pathway purine metabolism; AMP biosynthesis via de novo pathway; AMP from IMP: step 1/2. Plays an important role in the de novo pathway of purine nucleotide biosynthesis. Catalyzes the first committed step in the biosynthesis of AMP from IMP. This Xylella fastidiosa (strain M12) protein is Adenylosuccinate synthetase.